Here is a 382-residue protein sequence, read N- to C-terminus: Chorismate synthase (382 aa).

NADP(+) contacts are provided by R39 and R45. Residues 127–129 (RAS), 245–246 (QA), G290, 305–309 (KPIPT), and R331 contribute to the FMN site.

The protein belongs to the chorismate synthase family. In terms of assembly, homotetramer. It depends on FMNH2 as a cofactor.

It catalyses the reaction 5-O-(1-carboxyvinyl)-3-phosphoshikimate = chorismate + phosphate. It functions in the pathway metabolic intermediate biosynthesis; chorismate biosynthesis; chorismate from D-erythrose 4-phosphate and phosphoenolpyruvate: step 7/7. Its function is as follows. Catalyzes the anti-1,4-elimination of the C-3 phosphate and the C-6 proR hydrogen from 5-enolpyruvylshikimate-3-phosphate (EPSP) to yield chorismate, which is the branch point compound that serves as the starting substrate for the three terminal pathways of aromatic amino acid biosynthesis. This reaction introduces a second double bond into the aromatic ring system. The chain is Chorismate synthase from Desulfitobacterium hafniense (strain DSM 10664 / DCB-2).